The sequence spans 423 residues: Diels-Alderase pyiF (423 aa).

The signal sequence occupies residues 1-17; sequence MLPSFIFVYSLLATATA. 3 N-linked (GlcNAc...) asparagine glycosylation sites follow: Asn-60, Asn-92, and Asn-219.

This sequence belongs to the Diels-Alderase family.

It participates in mycotoxin biosynthesis. Functionally, diels-Alderase; part of the gene cluster that mediates the biosynthesis of the mycotoxin pyrichalasin H, a tyrosine-derived cytochalasan that inhibits the growth of rice seedlings, but also inhibits lymphocyte capping and actin polymerization and alters cell morphology. Pyrichalasin H is indicated as the responsible agent for the genus-specific pathogenicity of M.grisea toward crabgrass. The first step in the pathway is catalyzed by the O-methyltransferase pyiA which methylates free tyrosine to generate the precursor O-methyltyrosine. The hybrid PKS-NRPS pyiS, assisted by the enoyl reductase pyiC, are responsible for fusion of the O-methyltyrosine precursor and the polyketide backbone. The polyketide synthase module (PKS) of pyiS is responsible for the synthesis of the polyketide backbone and the downstream nonribosomal peptide synthetase (NRPS) amidates the carboxyl end of the polyketide with the O-methyltyrosine precursor. As the NRPS A-domain demonstrates substrate tolerance, pyiS can also use phenylalanine, tyrosine and even para-chlorophenylalanine as amino acid precursor, which leads to the production of novel cytochalasans, including halogenated cytochalasans. Because pyiS lacks a designated enoylreductase (ER) domain, the required activity is provided the enoyl reductase pyiC. Reduction by the hydrolyase pyiE leads to 1,5-dihydropyrrolone, which is substrate for dehydration and intra-molecular Diels-Alder cyclization by the Diels-Alderase pyiF to yield the required isoindolone-fused macrocycle. The tailoring cytochrome P450 monooxygenases piyD and piyG catalyze the hydroxylation at C-18 and C-7, respectivily, whereas the short-chain dehydrogenase/reductase pyiH reduces the carbonyl at C-21 in preparation for the transfer of an acetyl group by the acetyltransferase pyiB. These 3 reactions whose order is not clear yet, lead to the production of O-methylpyrichalasin J, a deacetylated pyrichalasin H. Finally, pyiB to converts O-methylpyrichalasin J into the final product pyrichalasin H via acetylation of C-21. The chain is Diels-Alderase pyiF from Pyricularia grisea (Crabgrass-specific blast fungus).